The chain runs to 149 residues: Nucleoside diphosphate kinase (149 aa).

The ATP site is built by Lys9, Phe57, Arg85, Thr91, Arg102, and Asn112. His115 acts as the Pros-phosphohistidine intermediate in catalysis.

It belongs to the NDK family. Homotetramer. Mg(2+) serves as cofactor.

The protein localises to the cytoplasm. The enzyme catalyses a 2'-deoxyribonucleoside 5'-diphosphate + ATP = a 2'-deoxyribonucleoside 5'-triphosphate + ADP. It catalyses the reaction a ribonucleoside 5'-diphosphate + ATP = a ribonucleoside 5'-triphosphate + ADP. In terms of biological role, major role in the synthesis of nucleoside triphosphates other than ATP. The ATP gamma phosphate is transferred to the NDP beta phosphate via a ping-pong mechanism, using a phosphorylated active-site intermediate. The protein is Nucleoside diphosphate kinase of Staphylococcus aureus (strain MSSA476).